Consider the following 427-residue polypeptide: MSFFALGVNHQTASVELREQIAFNAERLSNLLAEQRHHESLKDLVVVSTCNRTEVYAMAEDAESLLKWLADANNIDVKQLIHHVYRYENAQAITHLMRVASGLDSLMLGEPQILGQVKSALALSKEAQTVSPELNSVFEYAFYAAKRVRSETAVGSHAVSMGYAVAQLALQVFSKPEKLTVMVVAAGEMNSLVAKHLAEMGVAKMIICNRSRERADQLAQEIAHQVEVEIIDFSDLAENLYRADVVSSCTGSLHQVIAYADVKTALKKRRYQQMLMVDLAVPRDIDPKVESLDGVYLYGVDDLQSVIDENLAQRRQAAVEAEVMVNQLATQLITHQKVKEAGSTIHAYRQHSEEISQRELTHALEALHHGGNPEQVLQQFAHRLTQKLIHPTSMLLREAAKAESPDYFEWLQQHLQDVFDHERKPKR.

Substrate is bound by residues 49-52 (TCNR), Ser-105, 110-112 (EPQ), and Gln-116. Cys-50 serves as the catalytic Nucleophile. Position 185-190 (185-190 (AAGEMN)) interacts with NADP(+).

Belongs to the glutamyl-tRNA reductase family. As to quaternary structure, homodimer.

The catalysed reaction is (S)-4-amino-5-oxopentanoate + tRNA(Glu) + NADP(+) = L-glutamyl-tRNA(Glu) + NADPH + H(+). It participates in porphyrin-containing compound metabolism; protoporphyrin-IX biosynthesis; 5-aminolevulinate from L-glutamyl-tRNA(Glu): step 1/2. Catalyzes the NADPH-dependent reduction of glutamyl-tRNA(Glu) to glutamate 1-semialdehyde (GSA). The chain is Glutamyl-tRNA reductase from Acinetobacter baumannii (strain AB307-0294).